The primary structure comprises 183 residues: MKNYVIQRRYAKALLLIGKEDNNAEQYKEELNGFVSVLDMEKAFESAITNPLYPVEARRKVLDMVIEKLGVSVMMRSFLALLFEKRRIQHVRGINEVYQNLVDELKGIVRADVVSAGELSDDVVEKIRASLSKMTGKQVIVDIAQDPTLIGGIVTKVGDMVLDGSIKTQLSNMKESLKKGERV.

This sequence belongs to the ATPase delta chain family. As to quaternary structure, F-type ATPases have 2 components, F(1) - the catalytic core - and F(0) - the membrane proton channel. F(1) has five subunits: alpha(3), beta(3), gamma(1), delta(1), epsilon(1). F(0) has three main subunits: a(1), b(2) and c(10-14). The alpha and beta chains form an alternating ring which encloses part of the gamma chain. F(1) is attached to F(0) by a central stalk formed by the gamma and epsilon chains, while a peripheral stalk is formed by the delta and b chains.

It localises to the cell inner membrane. Its function is as follows. F(1)F(0) ATP synthase produces ATP from ADP in the presence of a proton or sodium gradient. F-type ATPases consist of two structural domains, F(1) containing the extramembraneous catalytic core and F(0) containing the membrane proton channel, linked together by a central stalk and a peripheral stalk. During catalysis, ATP synthesis in the catalytic domain of F(1) is coupled via a rotary mechanism of the central stalk subunits to proton translocation. In terms of biological role, this protein is part of the stalk that links CF(0) to CF(1). It either transmits conformational changes from CF(0) to CF(1) or is implicated in proton conduction. The chain is ATP synthase subunit delta from Desulfosudis oleivorans (strain DSM 6200 / JCM 39069 / Hxd3) (Desulfococcus oleovorans).